The primary structure comprises 360 residues: Aminomethyltransferase (360 aa).

The protein belongs to the GcvT family. As to quaternary structure, the glycine cleavage system is composed of four proteins: P, T, L and H.

The enzyme catalyses N(6)-[(R)-S(8)-aminomethyldihydrolipoyl]-L-lysyl-[protein] + (6S)-5,6,7,8-tetrahydrofolate = N(6)-[(R)-dihydrolipoyl]-L-lysyl-[protein] + (6R)-5,10-methylene-5,6,7,8-tetrahydrofolate + NH4(+). The glycine cleavage system catalyzes the degradation of glycine. This is Aminomethyltransferase from Pseudoalteromonas translucida (strain TAC 125).